Reading from the N-terminus, the 1025-residue chain is Beta-galactosidase (1025 aa).

Substrate-binding residues include Asn103 and Asp202. Asp202 serves as a coordination point for Na(+). Positions 417, 419, and 462 each coordinate Mg(2+). Residues Glu462 and 538–541 contribute to the substrate site; that span reads EYAH. The Proton donor role is filled by Glu462. The active-site Nucleophile is the Glu538. Asn598 provides a ligand contact to Mg(2+). Residues Phe602 and Asn605 each contribute to the Na(+) site. Asn605 and Trp1003 together coordinate substrate.

This sequence belongs to the glycosyl hydrolase 2 family. Homotetramer. The cofactor is Mg(2+). Na(+) is required as a cofactor.

It catalyses the reaction Hydrolysis of terminal non-reducing beta-D-galactose residues in beta-D-galactosides.. The polypeptide is Beta-galactosidase (Citrobacter koseri (strain ATCC BAA-895 / CDC 4225-83 / SGSC4696)).